The following is a 230-amino-acid chain: 5'-methylthioadenosine/S-adenosylhomocysteine nucleosidase (230 aa).

The active-site Proton acceptor is the Glu12. Substrate is bound by residues Gly78, Ile153, and 174–175 (ME). Catalysis depends on Asp198, which acts as the Proton donor.

The protein belongs to the PNP/UDP phosphorylase family. MtnN subfamily.

The enzyme catalyses S-adenosyl-L-homocysteine + H2O = S-(5-deoxy-D-ribos-5-yl)-L-homocysteine + adenine. The catalysed reaction is S-methyl-5'-thioadenosine + H2O = 5-(methylsulfanyl)-D-ribose + adenine. It carries out the reaction 5'-deoxyadenosine + H2O = 5-deoxy-D-ribose + adenine. The protein operates within amino-acid biosynthesis; L-methionine biosynthesis via salvage pathway; S-methyl-5-thio-alpha-D-ribose 1-phosphate from S-methyl-5'-thioadenosine (hydrolase route): step 1/2. Catalyzes the irreversible cleavage of the glycosidic bond in both 5'-methylthioadenosine (MTA) and S-adenosylhomocysteine (SAH/AdoHcy) to adenine and the corresponding thioribose, 5'-methylthioribose and S-ribosylhomocysteine, respectively. Also cleaves 5'-deoxyadenosine, a toxic by-product of radical S-adenosylmethionine (SAM) enzymes, into 5-deoxyribose and adenine. The protein is 5'-methylthioadenosine/S-adenosylhomocysteine nucleosidase of Shewanella denitrificans (strain OS217 / ATCC BAA-1090 / DSM 15013).